The sequence spans 364 residues: Histidinol-phosphate aminotransferase (364 aa).

Lys226 carries the post-translational modification N6-(pyridoxal phosphate)lysine.

It belongs to the class-II pyridoxal-phosphate-dependent aminotransferase family. Histidinol-phosphate aminotransferase subfamily. Homodimer. Pyridoxal 5'-phosphate is required as a cofactor.

It carries out the reaction L-histidinol phosphate + 2-oxoglutarate = 3-(imidazol-4-yl)-2-oxopropyl phosphate + L-glutamate. It participates in amino-acid biosynthesis; L-histidine biosynthesis; L-histidine from 5-phospho-alpha-D-ribose 1-diphosphate: step 7/9. The polypeptide is Histidinol-phosphate aminotransferase (Campylobacter jejuni subsp. doylei (strain ATCC BAA-1458 / RM4099 / 269.97)).